Here is a 491-residue protein sequence, read N- to C-terminus: Calcium/calmodulin-dependent protein kinase type II delta 1 chain (491 aa).

In terms of domain architecture, Protein kinase spans 13 to 271; the sequence is YQLYEELGKG…AAEALKHPWI (259 aa). Residues 19–27 and K42 contribute to the ATP site; that span reads LGKGAFSVV. Catalysis depends on D135, which acts as the Proton acceptor. The residue at position 286 (T286) is a Phosphothreonine. S314 is modified (phosphoserine). Positions 315–354 are disordered; it reads SKNPYKKPDGVKEPQTTVIHNPTDGNKESSESTNTTIEDE. The segment covering 328 to 338 has biased composition (polar residues); it reads PQTTVIHNPTD. T350 bears the Phosphothreonine mark.

This sequence belongs to the protein kinase superfamily. CAMK Ser/Thr protein kinase family. CaMK subfamily. In terms of assembly, CAMK2 is composed of four different chains: alpha, beta, gamma, and delta. The different isoforms assemble into homo- or heteromultimeric holoenzymes composed of 8 to 12 subunits. First detected at the 18-somite stage where expression is restricted to somite boundaries. At 24 hpf, expression is elevated in epidermal tissue and in the hatching gland. After 24 hpf, expression dimishes, but persists at low levels along the dorsal trunk. At 48 hpf, expression is restricted at a low level to the forebrain. At 72 hpf, weak expression reappears along the entire dorsal trunk in discrete cell bodies.

The catalysed reaction is L-seryl-[protein] + ATP = O-phospho-L-seryl-[protein] + ADP + H(+). The enzyme catalyses L-threonyl-[protein] + ATP = O-phospho-L-threonyl-[protein] + ADP + H(+). With respect to regulation, autophosphorylation of CAMK2 plays an important role in the regulation of the kinase activity. CaM-kinase II (CAMK2) is a prominent kinase in the central nervous system. In Danio rerio (Zebrafish), this protein is Calcium/calmodulin-dependent protein kinase type II delta 1 chain.